The following is a 291-amino-acid chain: Porphobilinogen deaminase (291 aa).

Cys237 is subject to S-(dipyrrolylmethanemethyl)cysteine.

The protein belongs to the HMBS family. Monomer. Dipyrromethane serves as cofactor.

The enzyme catalyses 4 porphobilinogen + H2O = hydroxymethylbilane + 4 NH4(+). It participates in porphyrin-containing compound metabolism; protoporphyrin-IX biosynthesis; coproporphyrinogen-III from 5-aminolevulinate: step 2/4. Functionally, tetrapolymerization of the monopyrrole PBG into the hydroxymethylbilane pre-uroporphyrinogen in several discrete steps. This chain is Porphobilinogen deaminase, found in Clostridium perfringens (strain SM101 / Type A).